The sequence spans 185 residues: Ribosome-recycling factor (185 aa).

This sequence belongs to the RRF family.

Its subcellular location is the cytoplasm. In terms of biological role, responsible for the release of ribosomes from messenger RNA at the termination of protein biosynthesis. May increase the efficiency of translation by recycling ribosomes from one round of translation to another. In Shewanella sediminis (strain HAW-EB3), this protein is Ribosome-recycling factor.